The following is a 352-amino-acid chain: Anthranilate phosphoribosyltransferase (352 aa).

5-phospho-alpha-D-ribose 1-diphosphate-binding positions include G83, 86-87, T91, 93-96, 111-119, and A123; these read GD, NIST, and KHGGRSVSS. G83 contacts anthranilate. S95 contacts Mg(2+). Residue R169 coordinates anthranilate. Residues D228 and E229 each coordinate Mg(2+).

Belongs to the anthranilate phosphoribosyltransferase family. In terms of assembly, homodimer. The cofactor is Mg(2+).

It catalyses the reaction N-(5-phospho-beta-D-ribosyl)anthranilate + diphosphate = 5-phospho-alpha-D-ribose 1-diphosphate + anthranilate. The protein operates within amino-acid biosynthesis; L-tryptophan biosynthesis; L-tryptophan from chorismate: step 2/5. Functionally, catalyzes the transfer of the phosphoribosyl group of 5-phosphorylribose-1-pyrophosphate (PRPP) to anthranilate to yield N-(5'-phosphoribosyl)-anthranilate (PRA). This chain is Anthranilate phosphoribosyltransferase, found in Neisseria meningitidis serogroup C (strain 053442).